A 210-amino-acid polypeptide reads, in one-letter code: dITP/XTP pyrophosphatase (210 aa).

Residue 16–21 (SNNKGK) coordinates substrate. Asp79 functions as the Proton acceptor in the catalytic mechanism. Asp79 provides a ligand contact to Mg(2+). Residues Ser80, 166–169 (FGYD), Lys189, and 194–195 (HR) contribute to the substrate site.

Belongs to the HAM1 NTPase family. In terms of assembly, homodimer. Requires Mg(2+) as cofactor.

It catalyses the reaction XTP + H2O = XMP + diphosphate + H(+). It carries out the reaction dITP + H2O = dIMP + diphosphate + H(+). The enzyme catalyses ITP + H2O = IMP + diphosphate + H(+). Functionally, pyrophosphatase that catalyzes the hydrolysis of nucleoside triphosphates to their monophosphate derivatives, with a high preference for the non-canonical purine nucleotides XTP (xanthosine triphosphate), dITP (deoxyinosine triphosphate) and ITP. Seems to function as a house-cleaning enzyme that removes non-canonical purine nucleotides from the nucleotide pool, thus preventing their incorporation into DNA/RNA and avoiding chromosomal lesions. This Acinetobacter baylyi (strain ATCC 33305 / BD413 / ADP1) protein is dITP/XTP pyrophosphatase.